Consider the following 75-residue polypeptide: RNA-binding protein KhpA (75 aa).

One can recognise a KH domain in the interval 29 to 75 (KKVYEIVVNEEDVGQVIGKDGRTIKSLKILLSALMGDSKEITIKVVR).

It belongs to the KhpA RNA-binding protein family. As to quaternary structure, forms a complex with KhpB.

The protein resides in the cytoplasm. A probable RNA chaperone. Forms a complex with KhpB which binds to cellular RNA and controls its expression. Plays a role in peptidoglycan (PG) homeostasis and cell length regulation. In Thermotoga maritima (strain ATCC 43589 / DSM 3109 / JCM 10099 / NBRC 100826 / MSB8), this protein is RNA-binding protein KhpA.